Reading from the N-terminus, the 606-residue chain is Armadillo repeat-containing X-linked protein 5 (606 aa).

The interval 1–85 (MIGSKTKRKA…KVKKKKDKTN (85 aa)) is disordered. Over residues 15-26 (GASSKPGTNSPA) the composition is skewed to polar residues. Residues 40 to 59 (VKAEPKEEWGNQAEARDEAV) are compositionally biased toward basic and acidic residues. ARM repeat units lie at residues 349-388 (CKSR…GISP), 470-509 (VKFD…CLSK), 511-551 (QANT…NINF), and 568-606 (SELI…ILKL).

It belongs to the eutherian X-chromosome-specific Armcx family. In terms of tissue distribution, highly expressed in the developing neural tissues, neural crest derivatives and hind limbs.

The chain is Armadillo repeat-containing X-linked protein 5 (Armcx5) from Mus musculus (Mouse).